The primary structure comprises 947 residues: Protein translocase subunit SecA (947 aa).

ATP contacts are provided by residues glutamine 87, 105 to 109, and aspartate 494; that span reads GEGKT. Residues 860–947 form a disordered region; the sequence is TAPKPLPTQE…NRAPKSKRKR (88 aa). Low complexity predominate over residues 870–885; it reads AAARTTGTAAPTALRA. Basic and acidic residues-rich tracts occupy residues 903-914 and 922-931; these read EDGKAKATRDSA and ASRRERREAA.

Belongs to the SecA family. Monomer and homodimer. Part of the essential Sec protein translocation apparatus which comprises SecA, SecYEG and auxiliary proteins SecDF. Other proteins may also be involved.

Its subcellular location is the cell membrane. The protein localises to the cytoplasm. The catalysed reaction is ATP + H2O + cellular proteinSide 1 = ADP + phosphate + cellular proteinSide 2.. Functionally, part of the Sec protein translocase complex. Interacts with the SecYEG preprotein conducting channel. Has a central role in coupling the hydrolysis of ATP to the transfer of proteins into and across the cell membrane, serving as an ATP-driven molecular motor driving the stepwise translocation of polypeptide chains across the membrane. In Rhodococcus erythropolis (strain PR4 / NBRC 100887), this protein is Protein translocase subunit SecA.